The sequence spans 209 residues: Urease accessory protein UreG (209 aa).

GTP is bound at residue 18–25 (GPVGSGKT).

It belongs to the SIMIBI class G3E GTPase family. UreG subfamily. As to quaternary structure, homodimer. UreD, UreF and UreG form a complex that acts as a GTP-hydrolysis-dependent molecular chaperone, activating the urease apoprotein by helping to assemble the nickel containing metallocenter of UreC. The UreE protein probably delivers the nickel.

The protein localises to the cytoplasm. In terms of biological role, facilitates the functional incorporation of the urease nickel metallocenter. This process requires GTP hydrolysis, probably effectuated by UreG. The chain is Urease accessory protein UreG from Cupriavidus pinatubonensis (strain JMP 134 / LMG 1197) (Cupriavidus necator (strain JMP 134)).